The sequence spans 262 residues: uncharacterized protein (262 aa).

Disordered stretches follow at residues methionine 1 to lysine 30 and glutamate 232 to glutamate 262. Acidic residues-rich tracts occupy residues asparagine 9–serine 21, glutamate 232–aspartate 245, and glutamate 253–glutamate 262.

This is an uncharacterized protein from Caenorhabditis elegans.